We begin with the raw amino-acid sequence, 140 residues long: L-fucose mutarotase (140 aa).

Catalysis depends on H22, which acts as the Proton donor. Residues D30, R107, and 129–131 (YGN) each bind substrate.

The protein belongs to the RbsD / FucU family. FucU mutarotase subfamily. As to quaternary structure, homodecamer.

Its subcellular location is the cytoplasm. It catalyses the reaction alpha-L-fucose = beta-L-fucose. Its pathway is carbohydrate metabolism; L-fucose metabolism. Involved in the anomeric conversion of L-fucose. The sequence is that of L-fucose mutarotase from Salmonella arizonae (strain ATCC BAA-731 / CDC346-86 / RSK2980).